The chain runs to 364 residues: Long-wave-sensitive opsin 1 (364 aa).

Residues 1–58 lie on the Extracellular side of the membrane; it reads MTQRWGPQRLAGGQPQAGLEESTQASIFTYTNSNATRDPFEGPNYHIAPRWVYHLTSA. Residue Ser22 is glycosylated (O-linked (GlcNAc) serine). An N-linked (GlcNAc...) asparagine glycan is attached at Asn34. The chain crosses the membrane as a helical span at residues 59–79; sequence WMIFVVIASVFTNGLVLVATM. Over 80-90 the chain is Cytoplasmic; the sequence is RFKKLRHPLNW. The helical transmembrane segment at 91 to 111 threads the bilayer; it reads ILVNLAIADLAETIIASTISV. At 112–126 the chain is on the extracellular side; sequence VNQIYGYFVLGHPLC. A disulfide bridge links Cys126 with Cys203. Residues 127–147 form a helical membrane-spanning segment; it reads VVEGYTVSLCGITGLWSLAII. Residues 148–168 lie on the Cytoplasmic side of the membrane; the sequence is SWERWLVVCKPFGNVRFDAKL. Residues 169–189 traverse the membrane as a helical segment; that stretch reads AIAGIAFSWIWAAVWTAPPIF. The Extracellular portion of the chain corresponds to 190–219; it reads GWSRYWPHGLKTSCGPDVFSGSSYPGVQSY. Residues 220 to 240 form a helical membrane-spanning segment; the sequence is MIVLMTTCCIIPLSVIILCYL. The Cytoplasmic portion of the chain corresponds to 241-269; sequence QVWLAIRAVAKQQKESESTQKAEKEVTRM. A helical transmembrane segment spans residues 270–290; the sequence is VVVMVLAYCLCWGPYTFFACF. Residues 291-301 lie on the Extracellular side of the membrane; that stretch reads AAAHPGYAFHP. A helical membrane pass occupies residues 302–324; the sequence is LVAALPAYFAKSATIYNPIIYVF. At Lys312 the chain carries N6-(retinylidene)lysine. At 325-364 the chain is on the cytoplasmic side; it reads MNRQFRNCILQLFGKKVDDSSELSSASRTEASSVSSVSPA.

It belongs to the G-protein coupled receptor 1 family. Opsin subfamily. Phosphorylated on some or all of the serine and threonine residues present in the C-terminal region. As to expression, the three color pigments are found in the cone photoreceptor cells.

It is found in the membrane. Functionally, visual pigments are the light-absorbing molecules that mediate vision. They consist of an apoprotein, opsin, covalently linked to cis-retinal. This chain is Long-wave-sensitive opsin 1 (OPN1LW), found in Canis lupus familiaris (Dog).